The chain runs to 1040 residues: Multidrug resistance protein MdtB (1040 aa).

12 consecutive transmembrane segments (helical) span residues 16 to 36 (FIMR…AGII), 347 to 367 (LMMA…NIPA), 369 to 389 (IIPG…MVFL), 396 to 416 (LTLM…IVVI), 440 to 460 (IGFT…PLLF), 472 to 492 (FAIT…TLTP), 537 to 557 (WLTL…WVFI), 863 to 883 (LGST…VLGI), 888 to 908 (FIHP…ALLA), 911 to 931 (IAGS…IGIV), 968 to 988 (ILMT…STGV), and 998 to 1018 (IGMV…TPVI).

This sequence belongs to the resistance-nodulation-cell division (RND) (TC 2.A.6) family. MdtB subfamily. As to quaternary structure, part of a tripartite efflux system composed of MdtA, MdtB and MdtC. MdtB forms a heteromultimer with MdtC.

Its subcellular location is the cell inner membrane. Its function is as follows. The MdtABC tripartite complex confers resistance against novobiocin and deoxycholate. In Escherichia coli O45:K1 (strain S88 / ExPEC), this protein is Multidrug resistance protein MdtB.